Consider the following 183-residue polypeptide: MASSMLSTAAVACINRASPAQASMVAPFTGLKSTSAFPTTRKTTTDITSIASNGGRVQCMQVWPPRGKKFYETLSYLPPLTREQLAKEVEYLLRKGWVPCLEFELEHGTVYREYHRSPGYYDGRYWTMWKLPMFGCTDAVQVLQELDEMIKAYPDCYGRIIGFDNVRQVQCISFLAYKPKGAE.

Residues 1-58 (MASSMLSTAAVACINRASPAQASMVAPFTGLKSTSAFPTTRKTTTDITSIASNGGRVQ) constitute a chloroplast transit peptide.

Belongs to the RuBisCO small chain family. Heterohexadecamer of 8 large and 8 small subunits.

Its subcellular location is the plastid. The protein localises to the chloroplast. Functionally, ruBisCO catalyzes two reactions: the carboxylation of D-ribulose 1,5-bisphosphate, the primary event in carbon dioxide fixation, as well as the oxidative fragmentation of the pentose substrate. Both reactions occur simultaneously and in competition at the same active site. Although the small subunit is not catalytic it is essential for maximal activity. This chain is Ribulose bisphosphate carboxylase small subunit, chloroplastic, found in Hevea brasiliensis (Para rubber tree).